The sequence spans 660 residues: Bifunctional polymyxin resistance protein ArnA (660 aa).

A formyltransferase ArnAFT region spans residues 1 to 304 (MKAVVFAYHD…TLGLVEGSRL (304 aa)). The active-site Proton donor; for formyltransferase activity is the histidine 104. (6R)-10-formyltetrahydrofolate-binding positions include arginine 114 and 136–140 (VAKAD). The dehydrogenase ArnADH stretch occupies residues 314-660 (RRTRVLILGV…RTVDIVEKSS (347 aa)). NAD(+) is bound by residues aspartate 347 and 368 to 369 (DI). UDP-alpha-D-glucuronate is bound by residues alanine 393, tyrosine 398, and 432–433 (TS). Glutamate 434 functions as the Proton acceptor; for decarboxylase activity in the catalytic mechanism. Residues arginine 460, asparagine 492, 526–535 (KLIDGGKQKR), and tyrosine 613 each bind UDP-alpha-D-glucuronate. Arginine 619 serves as the catalytic Proton donor; for decarboxylase activity.

The protein in the N-terminal section; belongs to the Fmt family. UDP-L-Ara4N formyltransferase subfamily. This sequence in the C-terminal section; belongs to the NAD(P)-dependent epimerase/dehydratase family. UDP-glucuronic acid decarboxylase subfamily. Homohexamer, formed by a dimer of trimers.

It carries out the reaction UDP-alpha-D-glucuronate + NAD(+) = UDP-beta-L-threo-pentopyranos-4-ulose + CO2 + NADH. The catalysed reaction is UDP-4-amino-4-deoxy-beta-L-arabinose + (6R)-10-formyltetrahydrofolate = UDP-4-deoxy-4-formamido-beta-L-arabinose + (6S)-5,6,7,8-tetrahydrofolate + H(+). It functions in the pathway nucleotide-sugar biosynthesis; UDP-4-deoxy-4-formamido-beta-L-arabinose biosynthesis; UDP-4-deoxy-4-formamido-beta-L-arabinose from UDP-alpha-D-glucuronate: step 1/3. Its pathway is nucleotide-sugar biosynthesis; UDP-4-deoxy-4-formamido-beta-L-arabinose biosynthesis; UDP-4-deoxy-4-formamido-beta-L-arabinose from UDP-alpha-D-glucuronate: step 3/3. The protein operates within bacterial outer membrane biogenesis; lipopolysaccharide biosynthesis. Functionally, bifunctional enzyme that catalyzes the oxidative decarboxylation of UDP-glucuronic acid (UDP-GlcUA) to UDP-4-keto-arabinose (UDP-Ara4O) and the addition of a formyl group to UDP-4-amino-4-deoxy-L-arabinose (UDP-L-Ara4N) to form UDP-L-4-formamido-arabinose (UDP-L-Ara4FN). The modified arabinose is attached to lipid A and is required for resistance to polymyxin and cationic antimicrobial peptides. The chain is Bifunctional polymyxin resistance protein ArnA from Escherichia fergusonii (strain ATCC 35469 / DSM 13698 / CCUG 18766 / IAM 14443 / JCM 21226 / LMG 7866 / NBRC 102419 / NCTC 12128 / CDC 0568-73).